Consider the following 480-residue polypeptide: Cysteine--tRNA ligase (480 aa).

Residue Cys-27 participates in Zn(2+) binding. A 'HIGH' region motif is present at residues 29 to 39 (PTVYNYAHIGN). Zn(2+) is bound by residues Cys-221, His-246, and Glu-250. The 'KMSKS' region signature appears at 278–282 (KMSKS). Lys-281 is an ATP binding site.

It belongs to the class-I aminoacyl-tRNA synthetase family. Monomer. Requires Zn(2+) as cofactor.

It localises to the cytoplasm. The enzyme catalyses tRNA(Cys) + L-cysteine + ATP = L-cysteinyl-tRNA(Cys) + AMP + diphosphate. This Borrelia garinii subsp. bavariensis (strain ATCC BAA-2496 / DSM 23469 / PBi) (Borreliella bavariensis) protein is Cysteine--tRNA ligase.